The sequence spans 341 residues: N-acetyl-gamma-glutamyl-phosphate reductase (341 aa).

C163 is a catalytic residue.

It belongs to the NAGSA dehydrogenase family. Type 1 subfamily.

It is found in the cytoplasm. It carries out the reaction N-acetyl-L-glutamate 5-semialdehyde + phosphate + NADP(+) = N-acetyl-L-glutamyl 5-phosphate + NADPH + H(+). It functions in the pathway amino-acid biosynthesis; L-arginine biosynthesis; N(2)-acetyl-L-ornithine from L-glutamate: step 3/4. Its function is as follows. Catalyzes the NADPH-dependent reduction of N-acetyl-5-glutamyl phosphate to yield N-acetyl-L-glutamate 5-semialdehyde. In Idiomarina loihiensis (strain ATCC BAA-735 / DSM 15497 / L2-TR), this protein is N-acetyl-gamma-glutamyl-phosphate reductase.